A 214-amino-acid polypeptide reads, in one-letter code: Mediator of RNA polymerase II transcription subunit 29 (214 aa).

Positions 1–78 (MMNQMGMHMQ…QQQSQQTEKV (78 aa)) are disordered. Residues 15 to 34 (VPGGPGGPVGMAGGPVGGVG) are compositionally biased toward gly residues. Residues 44–74 (QMQQQQQVAAQQQQQQQQQQQAQAHQQQSQQ) show a composition bias toward low complexity.

The protein belongs to the Mediator complex subunit 29 family. As to quaternary structure, component of the Mediator complex.

It is found in the nucleus. Component of the Mediator complex, a coactivator involved in the regulated transcription of nearly all RNA polymerase II-dependent genes. Mediator functions as a bridge to convey information from gene-specific regulatory proteins to the basal RNA polymerase II transcription machinery. Mediator is recruited to promoters by direct interactions with regulatory proteins and serves as a scaffold for the assembly of a functional preinitiation complex with RNA polymerase II and the general transcription factors. The chain is Mediator of RNA polymerase II transcription subunit 29 (ix) from Aedes aegypti (Yellowfever mosquito).